The sequence spans 713 residues: MTASVSNTQNKLNELLDAIRQEFLQVSQEANTYRLQNQKDYDFKMNQQLAEMQQIRNTVYELELTHRKMKDAYEEEIKHLKLGLEQRDHQIASLTVQQQRQQQQQQQVQQHLQQQQQQLAAASASVPVAQQPPATTSATATPAANTTTGSPSAFPVQASRPNLVGSQLPTTTLPVVSSNAQQQLPQQQLQQQQLQQQQPPPQVSVAPLSNTAINGSPTSKETTTLPSVKAPESTLKETEPENNNTSKINDTGSATTATTTTATETEIKPKEEDATPASLHQDHYLVPYNQRANHSKPIPPFLLDLDSQSVPDALKKQTNDYYILYNPALPREIDVELHKSLDHTSVVCCVKFSNDGEYLATGCNKTTQVYRVSDGSLVARLSDDSAANNHRNSITENNTTTSTDNNTMTTTTTTTITTTAMTSAAELAKDVENLNTSSSPSSDLYIRSVCFSPDGKFLATGAEDRLIRIWDIENRKIVMILQGHEQDIYSLDYFPSGDKLVSGSGDRTVRIWDLRTGQCSLTLSIEDGVTTVAVSPGDGKYIAAGSLDRAVRVWDSETGFLVERLDSENESGTGHKDSVYSVVFTRDGQSVVSGSLDRSVKLWNLQNANNKSDSKTPNSGTCEVTYIGHKDFVLSVATTQNDEYILSGSKDRGVLFWDKKSGNPLLMLQGHRNSVISVAVANGSPLGPEYNVFATGSGDCKARIWKYKKIAPN.

The segment covering 124–153 has biased composition (low complexity); sequence ASVPVAQQPPATTSATATPAANTTTGSPSA. Residues 124-278 are disordered; it reads ASVPVAQQPP…PKEEDATPAS (155 aa). A compositionally biased stretch (polar residues) spans 164-180; sequence VGSQLPTTTLPVVSSNA. A compositionally biased stretch (low complexity) spans 181–197; it reads QQQLPQQQLQQQQLQQQ. Composition is skewed to polar residues over residues 207–226 and 241–253; these read PLSNTAINGSPTSKETTTLP and ENNNTSKINDTGS. Residues 254–264 are compositionally biased toward low complexity; sequence ATTATTTTATE. One copy of the WD 1 repeat lies at 342-371; that stretch reads DHTSVVCCVKFSNDGEYLATGCNKTTQVYR. Residues 387–409 are disordered; that stretch reads ANNHRNSITENNTTTSTDNNTMT. Over residues 392-409 the composition is skewed to low complexity; that stretch reads NSITENNTTTSTDNNTMT. The residue at position 439 (Ser-439) is a Phosphoserine. WD repeat units follow at residues 441–471, 483–513, 524–555, 574–604, 628–658, and 670–706; these read SSDLYIRSVCFSPDGKFLATGAEDRLIRIWD, GHEQDIYSLDYFPSGDKLVSGSGDRTVRIWD, SIEDGVTTVAVSPGDGKYIAAGSLDRAVRVWD, GHKDSVYSVVFTRDGQSVVSGSLDRSVKLWN, GHKDFVLSVATTQNDEYILSGSKDRGVLFWD, and GHRNSVISVAVANGSPLGPEYNVFATGSGDCKARIWK.

The protein belongs to the WD repeat TUP1 family. Associates with CYC8/SSN6 to form the CYC8-TUP1 (or TUP1-SSN6) corepressor complex that is composed of 4 copies of TUP1 and one copy of CYC8. Interacts with histone H3, histone H4, MATALPHA2, RFX1, SKO1, PGD1, HDA1, HDA2, HOS1, HOS2 and RPD3.

Its subcellular location is the nucleus. Its function is as follows. Acts as a component of the CYC8-TUP1 corepressor complex which is involved in the repression of many genes in a wide variety of physiological processes including heme-regulated and catabolite repressed genes. May also be involved in the derepression of at least some target genes. The complex is recruited to target genes by interaction with DNA-bound transcriptional repressors, like MATALPHA2, MIG1, RFX1 and SKO1. The complex recruits histone deacetylases to produce a repressive chromatin structure, interacts with hypoacetylated N-terminal tails of histones H3 and H4 that have been programmed for repression by the action of histone deacetylases and interferes directly with the transcriptional machinery by associating with the RNA polymerase II mediator complex. This Saccharomyces cerevisiae (strain ATCC 204508 / S288c) (Baker's yeast) protein is General transcriptional corepressor TUP1 (TUP1).